The following is a 141-amino-acid chain: Large ribosomal subunit protein uL11 (141 aa).

This sequence belongs to the universal ribosomal protein uL11 family. As to quaternary structure, part of the ribosomal stalk of the 50S ribosomal subunit. Interacts with L10 and the large rRNA to form the base of the stalk. L10 forms an elongated spine to which L12 dimers bind in a sequential fashion forming a multimeric L10(L12)X complex. One or more lysine residues are methylated.

In terms of biological role, forms part of the ribosomal stalk which helps the ribosome interact with GTP-bound translation factors. This chain is Large ribosomal subunit protein uL11, found in Picosynechococcus sp. (strain ATCC 27264 / PCC 7002 / PR-6) (Agmenellum quadruplicatum).